The sequence spans 185 residues: Ribosome-recycling factor (185 aa).

The protein belongs to the RRF family.

The protein resides in the cytoplasm. Responsible for the release of ribosomes from messenger RNA at the termination of protein biosynthesis. May increase the efficiency of translation by recycling ribosomes from one round of translation to another. In Clostridium novyi (strain NT), this protein is Ribosome-recycling factor.